The following is a 309-amino-acid chain: UPF0252 protein PH0672 (309 aa).

The next 2 membrane-spanning stretches (helical) occupy residues 5-25 (SVII…NESI) and 106-126 (AVLT…LMIF).

Belongs to the UPF0252 family.

The protein resides in the cell membrane. This is UPF0252 protein PH0672 from Pyrococcus horikoshii (strain ATCC 700860 / DSM 12428 / JCM 9974 / NBRC 100139 / OT-3).